We begin with the raw amino-acid sequence, 964 residues long: Protein translocase subunit SecA (964 aa).

Residues Gln-86, Gly-104–Thr-108, and Asp-494 each bind ATP. The segment at Ala-848–Lys-964 is disordered. Residues Ala-871 to Thr-882 are compositionally biased toward acidic residues. The segment covering Ala-889–Ser-900 has biased composition (low complexity). The Zn(2+) site is built by Cys-947, Cys-949, Cys-958, and His-959.

It belongs to the SecA family. In terms of assembly, monomer and homodimer. Part of the essential Sec protein translocation apparatus which comprises SecA, SecYEG and auxiliary proteins SecDF. Other proteins may also be involved. Requires Zn(2+) as cofactor.

The protein resides in the cell membrane. The protein localises to the cytoplasm. The catalysed reaction is ATP + H2O + cellular proteinSide 1 = ADP + phosphate + cellular proteinSide 2.. Its function is as follows. Part of the Sec protein translocase complex. Interacts with the SecYEG preprotein conducting channel. Has a central role in coupling the hydrolysis of ATP to the transfer of proteins into and across the cell membrane, serving as an ATP-driven molecular motor driving the stepwise translocation of polypeptide chains across the membrane. The sequence is that of Protein translocase subunit SecA from Bifidobacterium longum (strain DJO10A).